An 863-amino-acid polypeptide reads, in one-letter code: DNA replication licensing factor mcm4-B (863 aa).

Residues 1–130 (MSSPTSTPSR…ARKVKQVDLH (130 aa)) form a disordered region. Composition is skewed to polar residues over residues 54 to 64 (SPSGDVQSPSG) and 84 to 99 (LDLS…SSRV). A C4-type zinc finger spans residues 306–331 (CQVCAFTTRVEIDRGRIAEPSVCKHC). Positions 458 to 667 (IYERLAAALA…YDRRLAHHLV (210 aa)) constitute an MCM domain. Tyrosine 471, arginine 497, lysine 516, serine 517, asparagine 618, arginine 643, arginine 732, and glutamate 735 together coordinate ATP. Positions 642–645 (SRFD) match the Arginine finger motif.

The protein belongs to the MCM family. As to quaternary structure, component of the mcm2-7 complex (RLF-M). The complex forms a toroidal hexameric ring with the proposed subunit order mcm2-mcm6-mcm4-mcm7-mcm3-mcm5. The heterodimer of mmcm3/mcm5 interacts with mcm4, mmcm6, mcm7 and weakly with mcm2. Begins to associate with zmcm6 at the neurula stage. Component of the CMG helicase complex, composed of the mcm2-7 complex, the GINS complex and cdc45. Hyperphosphorylated during mitosis in a mechanism requiring cdc2-cyclin B and other kinases. Undergoes dephosphorylation after exiting mitosis, existing in a partially phosphorylated state in the cytosolic interphase mcm complex which associates with the pre-replication complexes (pre-Rcs). Complete dephosphorylation inactivates the mcm complex, preventing its binding to chromatin. Becomes actively phosphorylated during S phase once the mcm complex is assembled on the chromatin. This chromatin-associated phosphorylation occurs during the activation of the pre-Rcs and is independent of cdks. Phosphorylated by the cdc7-dbf4b complex.

The protein resides in the nucleus. It is found in the chromosome. The catalysed reaction is ATP + H2O = ADP + phosphate + H(+). Functionally, acts as a component of the MCM2-7 complex (MCM complex) which is the replicative helicase essential for 'once per cell cycle' DNA replication initiation and elongation in eukaryotic cells. Core component of CDC45-MCM-GINS (CMG) helicase, the molecular machine that unwinds template DNA during replication, and around which the replisome is built. The active ATPase sites in the MCM2-7 ring are formed through the interaction surfaces of two neighboring subunits such that a critical structure of a conserved arginine finger motif is provided in trans relative to the ATP-binding site of the Walker A box of the adjacent subunit. The six ATPase active sites, however, are likely to contribute differentially to the complex helicase activity. The chain is DNA replication licensing factor mcm4-B (mcm4-b) from Xenopus laevis (African clawed frog).